A 172-amino-acid chain; its full sequence is Shikimate kinase (172 aa).

11-16 (ASGKTE) is a binding site for ATP. Residue T15 participates in Mg(2+) binding. Substrate is bound by residues D33, R57, and G80. ATP is bound at residue R120. Residue R142 coordinates substrate.

It belongs to the shikimate kinase family. Monomer. Mg(2+) is required as a cofactor.

It is found in the cytoplasm. It catalyses the reaction shikimate + ATP = 3-phosphoshikimate + ADP + H(+). Its pathway is metabolic intermediate biosynthesis; chorismate biosynthesis; chorismate from D-erythrose 4-phosphate and phosphoenolpyruvate: step 5/7. In terms of biological role, catalyzes the specific phosphorylation of the 3-hydroxyl group of shikimic acid using ATP as a cosubstrate. This Flavobacterium psychrophilum (strain ATCC 49511 / DSM 21280 / CIP 103535 / JIP02/86) protein is Shikimate kinase.